Consider the following 54-residue polypeptide: U-myrmicitoxin(01)-Tb5a (54 aa).

The N-terminal stretch at 1–26 is a signal peptide; sequence MQLSHLLLAFAMIFVMTIMYAPQVQA. A propeptide spanning residues 27-38 is cleaved from the precursor; the sequence is DAWADANADADV.

This sequence belongs to the formicidae venom precursor-01 superfamily. In terms of processing, contains 1 disulfide bond. Expressed by the venom gland.

Its subcellular location is the secreted. In Tetramorium bicarinatum (Tramp ant), this protein is U-myrmicitoxin(01)-Tb5a.